A 247-amino-acid polypeptide reads, in one-letter code: MGQCLAVHRRIMASQEFPNIPQPESQCHDAFIRYSPGRYERRAARSQVDYYLLPQAPRLMTEDLDKKEFQRLYDARCELVECPAGRRAMQLDVQIYADRYEATLNKILETSQELDKGLEDIFQAYTKDDPLADKVMNCRLTVDEMGRVYEHFFRESAWNLDSFVEYRKNLARDAYLLLADLKIAIQRLGMHFNPNFEDAQVKVDFQIMQAEQIIFHFKRTYRDALKHNPDSITEFVEDELEDPGTPL.

A lipid anchor (N-myristoyl glycine) is attached at Gly2.

As to expression, expressed in the 2 embryonic head hypodermal cells XXXL/R.

It localises to the cell membrane. Together with eak-6 and sdf-9, negatively regulates dauer larva formation downstream of the insulin-like receptor daf-2 and in parallel with age-1, pdk-1 and akt-1. This Caenorhabditis elegans protein is Protein eak-4.